A 90-amino-acid polypeptide reads, in one-letter code: MANHKSALKRVRQTKKRTERNRFYRTRMKNIIKDVKEAVASGNKAAAIEALKVANKRIHEYVSKGIIKKNNAARKVSKLHKLVNSMNEAA.

The tract at residues 1–21 (MANHKSALKRVRQTKKRTERN) is disordered.

The protein belongs to the bacterial ribosomal protein bS20 family.

Binds directly to 16S ribosomal RNA. This Nitratiruptor sp. (strain SB155-2) protein is Small ribosomal subunit protein bS20.